The primary structure comprises 454 residues: Tegument protein VP16 homolog (454 aa).

It belongs to the herpesviridae tegument protein VP16 protein family. As to quaternary structure, associates with the VP16-induced complex; binding to host HCFC1 activates VP16 for association with the octamer motif-binding host protein POU2F1, to form a multiprotein-DNA complex responsible for activating transcription of the viral immediate early genes.

It is found in the virion tegument. It localises to the host nucleus. Transcriptional activator of immediate-early (IE) gene products (alpha genes). Acts as a key activator of lytic infection by initiating the lytic program through the assembly of the transcriptional regulatory VP16-induced complex composed of VP16 and two cellular factors, HCFC1 and POU2F1. VP16-induced complex represents a regulatory switch: when it is on, it promotes IE-gene expression and thus lytic infection, and when it is off, it limits IE-gene transcription favoring latent infection. Its function is as follows. May play a role in the aggregation of tegument proteins around nucleocapsids during virus morphogenesis. In Equine herpesvirus 4 (strain 1942) (EHV-4), this protein is Tegument protein VP16 homolog (12).